A 200-amino-acid polypeptide reads, in one-letter code: Imidazoleglycerol-phosphate dehydratase (200 aa).

It belongs to the imidazoleglycerol-phosphate dehydratase family.

It localises to the cytoplasm. The catalysed reaction is D-erythro-1-(imidazol-4-yl)glycerol 3-phosphate = 3-(imidazol-4-yl)-2-oxopropyl phosphate + H2O. It participates in amino-acid biosynthesis; L-histidine biosynthesis; L-histidine from 5-phospho-alpha-D-ribose 1-diphosphate: step 6/9. The sequence is that of Imidazoleglycerol-phosphate dehydratase from Chlorobium phaeobacteroides (strain DSM 266 / SMG 266 / 2430).